A 133-amino-acid chain; its full sequence is Large ribosomal subunit protein eL14 (133 aa).

It belongs to the eukaryotic ribosomal protein eL14 family.

The chain is Large ribosomal subunit protein eL14 (RPL14) from Griffithsia japonica (Red alga).